The following is a 98-amino-acid chain: Small ribosomal subunit protein bS20 (98 aa).

Over residues 1-12 the composition is skewed to basic residues; it reads MAPKKTTKKGGP. The tract at residues 1–20 is disordered; that stretch reads MAPKKTTKKGGPQKRPSAEK.

It belongs to the bacterial ribosomal protein bS20 family.

Its function is as follows. Binds directly to 16S ribosomal RNA. This chain is Small ribosomal subunit protein bS20, found in Chlamydia caviae (strain ATCC VR-813 / DSM 19441 / 03DC25 / GPIC) (Chlamydophila caviae).